A 62-amino-acid polypeptide reads, in one-letter code: uncharacterized protein (62 aa).

This is an uncharacterized protein from Homo sapiens (Human).